The following is a 90-amino-acid chain: Keratin-associated protein 19-1 (90 aa).

The tract at residues 5-84 (GSYYGGLGYS…CCRPSYNGGY (80 aa)) is 26 X 2 AA repeats of G-[YCGS].

The protein belongs to the KRTAP type 19 family. As to quaternary structure, interacts with hair keratins. As to expression, detected in the upper portion of the hair cortex.

Functionally, in the hair cortex, hair keratin intermediate filaments are embedded in an interfilamentous matrix, consisting of hair keratin-associated proteins (KRTAP), which are essential for the formation of a rigid and resistant hair shaft through their extensive disulfide bond cross-linking with abundant cysteine residues of hair keratins. The matrix proteins include the high-sulfur and high-glycine-tyrosine keratins. The chain is Keratin-associated protein 19-1 (KRTAP19-1) from Homo sapiens (Human).